The sequence spans 160 residues: MANIRIGHGYDVHAFKAGGHVVLGGVRIPHAKAFAAHSDGDVLIHALCDALLGAAALGDIGRHFPDTDPAYKGADSRVLLRRVVELLHEQGYRVGNVDATIIAQAPKMAPHIEAMRANLADDLGVALECVNVKATTTERLGFAGREEGIAAHAVALIESF.

Residues aspartate 11 and histidine 13 each coordinate a divalent metal cation. Residues 11-13 (DVH) and 37-38 (HS) each bind 4-CDP-2-C-methyl-D-erythritol 2-phosphate. Position 45 (histidine 45) interacts with a divalent metal cation. 4-CDP-2-C-methyl-D-erythritol 2-phosphate contacts are provided by residues 59–61 (DIG), 64–68 (FPDTD), 103–109 (AQAPKMA), 135–138 (TTTE), phenylalanine 142, and arginine 145.

This sequence belongs to the IspF family. As to quaternary structure, homotrimer. Requires a divalent metal cation as cofactor.

The enzyme catalyses 4-CDP-2-C-methyl-D-erythritol 2-phosphate = 2-C-methyl-D-erythritol 2,4-cyclic diphosphate + CMP. It participates in isoprenoid biosynthesis; isopentenyl diphosphate biosynthesis via DXP pathway; isopentenyl diphosphate from 1-deoxy-D-xylulose 5-phosphate: step 4/6. Involved in the biosynthesis of isopentenyl diphosphate (IPP) and dimethylallyl diphosphate (DMAPP), two major building blocks of isoprenoid compounds. Catalyzes the conversion of 4-diphosphocytidyl-2-C-methyl-D-erythritol 2-phosphate (CDP-ME2P) to 2-C-methyl-D-erythritol 2,4-cyclodiphosphate (ME-CPP) with a corresponding release of cytidine 5-monophosphate (CMP). This Thioalkalivibrio sulfidiphilus (strain HL-EbGR7) protein is 2-C-methyl-D-erythritol 2,4-cyclodiphosphate synthase.